Reading from the N-terminus, the 63-residue chain is Large ribosomal subunit protein eL37 (63 aa).

Zn(2+) is bound by residues Cys20, Cys23, Cys35, and Cys38. Residues 20 to 38 (CRRCGRHSFNVRKGYCVAC) form a C4-type zinc finger.

Belongs to the eukaryotic ribosomal protein eL37 family. Requires Zn(2+) as cofactor.

Its function is as follows. Binds to the 23S rRNA. In Ignicoccus hospitalis (strain KIN4/I / DSM 18386 / JCM 14125), this protein is Large ribosomal subunit protein eL37.